A 435-amino-acid chain; its full sequence is Nicotinate phosphoribosyltransferase (435 aa).

Histidine 230 carries the post-translational modification Phosphohistidine; by autocatalysis.

The protein belongs to the NAPRTase family. Transiently phosphorylated on a His residue during the reaction cycle. Phosphorylation strongly increases the affinity for substrates and increases the rate of nicotinate D-ribonucleotide production. Dephosphorylation regenerates the low-affinity form of the enzyme, leading to product release.

It catalyses the reaction nicotinate + 5-phospho-alpha-D-ribose 1-diphosphate + ATP + H2O = nicotinate beta-D-ribonucleotide + ADP + phosphate + diphosphate. Its pathway is cofactor biosynthesis; NAD(+) biosynthesis; nicotinate D-ribonucleotide from nicotinate: step 1/1. In terms of biological role, catalyzes the synthesis of beta-nicotinate D-ribonucleotide from nicotinate and 5-phospho-D-ribose 1-phosphate at the expense of ATP. The chain is Nicotinate phosphoribosyltransferase from Vibrio cholerae serotype O1 (strain ATCC 39541 / Classical Ogawa 395 / O395).